The sequence spans 524 residues: Phenylalanine--tRNA ligase alpha subunit (524 aa).

L-phenylalanine is bound by residues Thr-362, Tyr-441, and Phe-467.

Belongs to the class-II aminoacyl-tRNA synthetase family. Phe-tRNA synthetase alpha subunit type 2 subfamily. Tetramer of two alpha and two beta subunits. Mg(2+) is required as a cofactor.

The protein resides in the cytoplasm. It carries out the reaction tRNA(Phe) + L-phenylalanine + ATP = L-phenylalanyl-tRNA(Phe) + AMP + diphosphate + H(+). In Methanopyrus kandleri (strain AV19 / DSM 6324 / JCM 9639 / NBRC 100938), this protein is Phenylalanine--tRNA ligase alpha subunit.